Here is a 165-residue protein sequence, read N- to C-terminus: Ribosome maturation factor RimM (165 aa).

The 72-residue stretch at 94-165 folds into the PRC barrel domain; it reads EDEFYIADLT…YVILNYQREA (72 aa).

The protein belongs to the RimM family. Binds ribosomal protein uS19.

It localises to the cytoplasm. An accessory protein needed during the final step in the assembly of 30S ribosomal subunit, possibly for assembly of the head region. Essential for efficient processing of 16S rRNA. May be needed both before and after RbfA during the maturation of 16S rRNA. It has affinity for free ribosomal 30S subunits but not for 70S ribosomes. The polypeptide is Ribosome maturation factor RimM (Rickettsia conorii (strain ATCC VR-613 / Malish 7)).